The sequence spans 140 residues: Nucleoside diphosphate kinase (140 aa).

Residues K11, F59, R87, T93, R104, and N114 each contribute to the ATP site. H117 serves as the catalytic Pros-phosphohistidine intermediate.

The protein belongs to the NDK family. As to quaternary structure, homotetramer. Mg(2+) is required as a cofactor.

It is found in the cytoplasm. The enzyme catalyses a 2'-deoxyribonucleoside 5'-diphosphate + ATP = a 2'-deoxyribonucleoside 5'-triphosphate + ADP. The catalysed reaction is a ribonucleoside 5'-diphosphate + ATP = a ribonucleoside 5'-triphosphate + ADP. Functionally, major role in the synthesis of nucleoside triphosphates other than ATP. The ATP gamma phosphate is transferred to the NDP beta phosphate via a ping-pong mechanism, using a phosphorylated active-site intermediate. The polypeptide is Nucleoside diphosphate kinase (Paracoccus denitrificans (strain Pd 1222)).